The sequence spans 123 residues: NADH-quinone oxidoreductase subunit A (123 aa).

Helical transmembrane passes span 11–31 (YLPIAIFFGIAVLVSGLIMIL), 64–84 (ICFYLVAILFIIFDLEIAFLV), and 93–113 (IGKIGFFSMMFFLFVLIIGFI).

This sequence belongs to the complex I subunit 3 family. As to quaternary structure, NDH-1 is composed of 14 different subunits. Subunits NuoA, H, J, K, L, M, N constitute the membrane sector of the complex.

Its subcellular location is the cell inner membrane. The enzyme catalyses a quinone + NADH + 5 H(+)(in) = a quinol + NAD(+) + 4 H(+)(out). NDH-1 shuttles electrons from NADH, via FMN and iron-sulfur (Fe-S) centers, to quinones in the respiratory chain. The immediate electron acceptor for the enzyme in this species is believed to be ubiquinone. Couples the redox reaction to proton translocation (for every two electrons transferred, four hydrogen ions are translocated across the cytoplasmic membrane), and thus conserves the redox energy in a proton gradient. The chain is NADH-quinone oxidoreductase subunit A from Rickettsia conorii (strain ATCC VR-613 / Malish 7).